The primary structure comprises 520 residues: ADP,ATP carrier protein 4 (520 aa).

12 helical membrane passes run Leu43 to Ile63, Ile80 to Val100, Ile111 to Phe131, Phe166 to Trp186, Phe201 to Glu221, Phe240 to Ile260, Leu305 to Lys325, Ala339 to Leu359, Phe370 to Val390, Leu399 to Ile419, Leu462 to Ser482, and Ser485 to Val505.

It belongs to the ADP/ATP translocase tlc family.

It localises to the cell membrane. Provides the rickettsial cell with host ATP in exchange for rickettsial ADP. This is an obligate exchange system. This energy acquiring activity is an important component of rickettsial parasitism. The sequence is that of ADP,ATP carrier protein 4 (tlcD) from Rickettsia bellii (strain RML369-C).